A 590-amino-acid chain; its full sequence is Ankyrin repeat-containing protein ITN1 (590 aa).

A disordered region spans residues 25–44 (ENQNPMIDPSPTPSPSATAT). ANK repeat units follow at residues 73 to 102 (HNDTELHLAAQRGDLAAVQQILKDINSQME), 128 to 157 (LGETALFTAADKGHLDVVKELLKYSSRESI), 163 to 192 (SGYDPLHIAAIQGHHAIVEVLLDHDATLSQ), 197 to 226 (SNATPLVSAAMRGHTEVVNQLLSKAGNLLE), 231 to 260 (NNKNALHLAARQGHVEVIKALLSKDPQLAR), 265 to 294 (KGQTALHMAVKGQSSEVVKLLLDADPAIVM), and 299 to 329 (SCNTALHVATRKKRAEIVELLLSLPDTNANT). The next 4 helical transmembrane spans lie at 422 to 442 (VTVVAVLFATVAFAAIFTVPG), 460 to 480 (IFFIFNALALFTSLAVVVVQI), 500 to 520 (LMWLASMCTSVAFLASSYIVV), and 531 to 551 (VTVVGGVIMAGVLGTMTYYVV).

As to quaternary structure, interacts with REM19/RTV1. As to expression, expressed in roots, shoots, leaf vasculature and stems.

It localises to the cell membrane. In terms of biological role, involved in salt stress tolerance. May act through abscisic acid (ABA) signaling pathways and promote reactive oxygen species (ROS) production. This is Ankyrin repeat-containing protein ITN1 from Arabidopsis thaliana (Mouse-ear cress).